Here is a 796-residue protein sequence, read N- to C-terminus: Protein translocase subunit SecA 2 (796 aa).

Residues Q84, 102–106 (GEGKT), and D496 contribute to the ATP site.

Belongs to the SecA family. In terms of assembly, monomer and homodimer. Part of the essential Sec protein translocation apparatus which comprises SecA, SecYEG and auxiliary proteins SecDF. Other proteins may also be involved.

It is found in the cell membrane. It localises to the cytoplasm. It catalyses the reaction ATP + H2O + cellular proteinSide 1 = ADP + phosphate + cellular proteinSide 2.. Part of the Sec protein translocase complex. Interacts with the SecYEG preprotein conducting channel. Has a central role in coupling the hydrolysis of ATP to the transfer of proteins into and across the cell membrane, serving as an ATP-driven molecular motor driving the stepwise translocation of polypeptide chains across the membrane. In Staphylococcus aureus (strain Mu3 / ATCC 700698), this protein is Protein translocase subunit SecA 2.